The primary structure comprises 689 residues: Collagen alpha-2(IX) chain (689 aa).

The N-terminal stretch at 1–23 (MAAATASPRSLLVLLQVVVLALA) is a signal peptide. The interval 26-518 (RGPPGERGPP…QPGRQGVEGR (493 aa)) is disordered. A triple-helical region 4 (COL4) region spans residues 27–163 (GPPGERGPPG…PGKPGRPGTI (137 aa)). Pro residues predominate over residues 31-43 (ERGPPGPPGPPGV). Positions 44-56 (PGSDGIDGDNGPP) are enriched in low complexity. Pro residues-rich tracts occupy residues 106 to 127 (LPGPPGLPGPGFAGPPGPPGPV) and 144 to 157 (PDGPSGPPGPPGKP). Proline 160 carries the 4-hydroxyproline modification. Positions 164 to 180 (QGLEGSADFLCPTNCPP) are nonhelical region 4 (NC4). Serine 169 carries O-linked (Xyl...) (glycosaminoglycan) serine glycosylation. Residues 181–519 (GMKGPPGLQG…PGRQGVEGRD (339 aa)) form a triple-helical region 3 (COL3) region. Lysine 183 is subject to 5-hydroxylysine. O-linked (Gal...) hydroxylysine glycosylation is present at lysine 183. Gly residues predominate over residues 343–352 (GTKGGPGDQG). 2 stretches are compositionally biased toward low complexity: residues 353-366 (EPGPQGLPGFSGPP) and 393-413 (RGPVGQPGPQGRQGPKGEQGP). Positions 520–549 (ATDQHIVDVALKMLQEQLAEVAVSAKREAL) are nonhelical region 3 (NC3). Residues 550–632 (GAVGMMGPPG…PGLPGRPGQA (83 aa)) form a triple-helical region 2 (COL2) region. Residues 554 to 663 (MMGPPGPPGP…LPGPVGLPGF (110 aa)) are disordered. Over residues 557–566 (PPGPPGPPGY) the composition is skewed to pro residues. Over residues 599-611 (KRGEKGDPGEVGR) the composition is skewed to basic and acidic residues. The tract at residues 633–634 (IN) is nonhelical region 2 (NC2). The triple-helical region 1 (COL1) stretch occupies residues 635-664 (GKDGDRGSPGAPGEAGRPGLPGPVGLPGFC). Residues 665 to 689 (EPAACLGASAYASARLTEPGSIKGP) form a nonhelical region 1 (NC1) region.

Belongs to the fibril-associated collagens with interrupted helices (FACIT) family. In terms of assembly, heterotrimer of an alpha 1(IX), an alpha 2(IX) and an alpha 3(IX) chain. The chains are linked to each other by interchain disulfide bonds. Trimers are also cross-linked via hydroxylysines. Post-translationally, covalently linked to the telopeptides of type II collagen by lysine-derived cross-links. In terms of processing, prolines at the third position of the tripeptide repeating unit (G-X-Y) are hydroxylated in some or all of the chains.

It is found in the secreted. The protein localises to the extracellular space. Its subcellular location is the extracellular matrix. Structural component of hyaline cartilage and vitreous of the eye. The polypeptide is Collagen alpha-2(IX) chain (Homo sapiens (Human)).